The primary structure comprises 287 residues: Ventral anterior homeobox 1b (287 aa).

Basic and acidic residues predominate over residues 1–33 (MFEKTRDMDVRCNIEENGRISKPKDNKEIRESQ). Positions 1-55 (MFEKTRDMDVRCNIEENGRISKPKDNKEIRESQSKMPSTYPAPGSSEGCAKNKSS) are disordered. The homeobox DNA-binding region spans 89–148 (PKRTRTSFTAEQLYRLEMEFQRCQYVVGRERTELARQLNLSETQVKVWFQNRRTKQKKDQ).

The protein belongs to the EMX homeobox family.

The protein localises to the nucleus. Functionally, involved in ventral eye development. This Xenopus laevis (African clawed frog) protein is Ventral anterior homeobox 1b (vax1-b).